Here is a 174-residue protein sequence, read N- to C-terminus: ATP synthase subunit b (174 aa).

The chain crosses the membrane as a helical span at residues 9-29 (LPNTSLIFWEVVTFLILLALL).

Belongs to the ATPase B chain family. In terms of assembly, F-type ATPases have 2 components, F(1) - the catalytic core - and F(0) - the membrane proton channel. F(1) has five subunits: alpha(3), beta(3), gamma(1), delta(1), epsilon(1). F(0) has three main subunits: a(1), b(2) and c(10-14). The alpha and beta chains form an alternating ring which encloses part of the gamma chain. F(1) is attached to F(0) by a central stalk formed by the gamma and epsilon chains, while a peripheral stalk is formed by the delta and b chains.

The protein resides in the cell membrane. Functionally, f(1)F(0) ATP synthase produces ATP from ADP in the presence of a proton or sodium gradient. F-type ATPases consist of two structural domains, F(1) containing the extramembraneous catalytic core and F(0) containing the membrane proton channel, linked together by a central stalk and a peripheral stalk. During catalysis, ATP synthesis in the catalytic domain of F(1) is coupled via a rotary mechanism of the central stalk subunits to proton translocation. Component of the F(0) channel, it forms part of the peripheral stalk, linking F(1) to F(0). This chain is ATP synthase subunit b, found in Rubrobacter xylanophilus (strain DSM 9941 / JCM 11954 / NBRC 16129 / PRD-1).